The primary structure comprises 149 residues: D-aminoacyl-tRNA deacylase (149 aa).

The short motif at 141–142 is the Gly-cisPro motif, important for rejection of L-amino acids element; the sequence is GP.

It belongs to the DTD family. Homodimer.

The protein localises to the cytoplasm. It carries out the reaction glycyl-tRNA(Ala) + H2O = tRNA(Ala) + glycine + H(+). It catalyses the reaction a D-aminoacyl-tRNA + H2O = a tRNA + a D-alpha-amino acid + H(+). In terms of biological role, an aminoacyl-tRNA editing enzyme that deacylates mischarged D-aminoacyl-tRNAs. Also deacylates mischarged glycyl-tRNA(Ala), protecting cells against glycine mischarging by AlaRS. Acts via tRNA-based rather than protein-based catalysis; rejects L-amino acids rather than detecting D-amino acids in the active site. By recycling D-aminoacyl-tRNA to D-amino acids and free tRNA molecules, this enzyme counteracts the toxicity associated with the formation of D-aminoacyl-tRNA entities in vivo and helps enforce protein L-homochirality. The chain is D-aminoacyl-tRNA deacylase from Streptomyces griseus subsp. griseus (strain JCM 4626 / CBS 651.72 / NBRC 13350 / KCC S-0626 / ISP 5235).